The primary structure comprises 238 residues: Putative csd-like protein HI_1343 (238 aa).

Lys146 carries the post-translational modification N6-(pyridoxal phosphate)lysine.

It belongs to the class-V pyridoxal-phosphate-dependent aminotransferase family. Csd subfamily.

This Haemophilus influenzae (strain ATCC 51907 / DSM 11121 / KW20 / Rd) protein is Putative csd-like protein HI_1343.